The following is a 286-amino-acid chain: ATP synthase gamma chain (286 aa).

This sequence belongs to the ATPase gamma chain family. F-type ATPases have 2 components, CF(1) - the catalytic core - and CF(0) - the membrane proton channel. CF(1) has five subunits: alpha(3), beta(3), gamma(1), delta(1), epsilon(1). CF(0) has three main subunits: a, b and c.

It is found in the cell inner membrane. Produces ATP from ADP in the presence of a proton gradient across the membrane. The gamma chain is believed to be important in regulating ATPase activity and the flow of protons through the CF(0) complex. This Pseudomonas putida (strain GB-1) protein is ATP synthase gamma chain.